Here is a 255-residue protein sequence, read N- to C-terminus: 3-oxoacyl-[acyl-carrier-protein] reductase MabA (255 aa).

Residues 33–35 (RGI), R55, 69–70 (DV), G98, Y161, K165, I194, and R205 each bind NADP(+). Y161 acts as the Proton acceptor in catalysis.

This sequence belongs to the short-chain dehydrogenases/reductases (SDR) family. In terms of assembly, homotetramer.

It is found in the secreted. Its subcellular location is the cell wall. It carries out the reaction a (3R)-hydroxyacyl-[ACP] + NADP(+) = a 3-oxoacyl-[ACP] + NADPH + H(+). Its pathway is lipid metabolism; mycolic acid biosynthesis. In terms of biological role, part of the mycobacterial fatty acid elongation system FAS-II, which is involved in mycolic acid biosynthesis. Catalyzes the NADPH-dependent reduction of beta-ketoacyl derivatives, the second step of the FAS-II elongation cycle. This chain is 3-oxoacyl-[acyl-carrier-protein] reductase MabA, found in Mycobacterium avium.